Here is a 426-residue protein sequence, read N- to C-terminus: Histidine--tRNA ligase (426 aa).

It belongs to the class-II aminoacyl-tRNA synthetase family. As to quaternary structure, homodimer.

The protein localises to the cytoplasm. The catalysed reaction is tRNA(His) + L-histidine + ATP = L-histidyl-tRNA(His) + AMP + diphosphate + H(+). The chain is Histidine--tRNA ligase from Streptococcus pyogenes serotype M28 (strain MGAS6180).